A 506-amino-acid chain; its full sequence is Dolabradiene monooxygenase (506 aa).

A helical membrane pass occupies residues 5 to 25; the sequence is VLLAVAMVALIAVLSKLKSLL. Residue Cys-443 participates in heme binding.

It belongs to the cytochrome P450 family. Heme serves as cofactor.

The protein localises to the membrane. It carries out the reaction dolabradiene + reduced [NADPH--hemoprotein reductase] + O2 = 15,16-epoxydolabrene + oxidized [NADPH--hemoprotein reductase] + H2O + H(+). It catalyses the reaction 15,16-epoxydolabrene + reduced [NADPH--hemoprotein reductase] + O2 = 3beta-hydroxy-15,16-epoxydolabrene + oxidized [NADPH--hemoprotein reductase] + H2O + H(+). Functionally, involved in the production of antifungal dolabralexin phytoalexins in response to biotic and abiotic stresses. Catalyzes the epoxidation of dolabradiene at C-16, followed by hydroxylation at C-3, to yield the epoxides 15,16-epoxydolabrene (epoxydolabrene) and 3b-hydroxy-15,16-epoxydolabrene (epoxydolabranol). The chain is Dolabradiene monooxygenase from Zea mays (Maize).